The following is a 156-amino-acid chain: Small ribosomal subunit protein uS7 (156 aa).

This sequence belongs to the universal ribosomal protein uS7 family. In terms of assembly, part of the 30S ribosomal subunit. Contacts proteins S9 and S11.

One of the primary rRNA binding proteins, it binds directly to 16S rRNA where it nucleates assembly of the head domain of the 30S subunit. Is located at the subunit interface close to the decoding center, probably blocks exit of the E-site tRNA. The protein is Small ribosomal subunit protein uS7 of Baumannia cicadellinicola subsp. Homalodisca coagulata.